Consider the following 415-residue polypeptide: Nacrein-like protein C2 (415 aa).

The N-linked (GlcNAc...) asparagine glycan is linked to Asn27. Residues 33-414 (AGFSYDRSIC…KNKVTVYKSF (382 aa)) form the Alpha-carbonic anhydrase domain. Residues His132, His134, and His157 each contribute to the Zn(2+) site. The segment at 201 to 297 (DEPDDEECKH…GENGHKHGCR (97 aa)) is disordered. A compositionally biased stretch (basic and acidic residues) spans 207-219 (ECKHILKGHHPDN). The segment covering 220–289 (NENGNGDNGN…NNGENGNNGE (70 aa)) has biased composition (low complexity). Tandem repeats lie at residues 225-227 (GDN), 228-230 (GNN), 231-233 (GYN), 234-236 (GDN), 237-239 (GNN), 240-242 (GDN), 243-245 (GNN), 246-248 (GYN), 249-251 (GDN), 252-254 (GNN), 255-257 (GVN), 258-260 (GNN), 261-263 (GYN), 264-266 (GDN), 267-269 (GNN), 270-272 (GDN), 273-275 (GNN), 276-278 (GEN), 279-281 (GNN), 282-284 (GEN), 285-286 (GN), and 288-290 (GEN). Residues 225–290 (GDNGNNGYNG…NGENGNNGEN (66 aa)) are 27 X 3 AA approximate tandem repeats of G-X-N. 355–356 (TT) contributes to the substrate binding site.

This sequence belongs to the alpha-carbonic anhydrase family. In terms of assembly, homooligomer; disulfide-linked. May also be disulfide-linked to insoluble organic matrix. Requires Zn(2+) as cofactor. In terms of tissue distribution, expressed in the mantle.

It is found in the secreted. The protein localises to the extracellular space. It localises to the extracellular matrix. The catalysed reaction is hydrogencarbonate + H(+) = CO2 + H2O. Acts as a negative regulator for calcification in the shells of mollusks. May function both as a calcium concentrator and as a carbonic anhydrase required for production of carbonate ions, which are assembled to CaCO(3) at mineralization sites. Is important for shell formation in both the calcitic prismatic layer and the aragonitic nacreous layer. Shows inhibitory activity of crystal formation when present in free state but, when attached to the insoluble matrix, may regulate the form and size of aragonite crystal. This Crassostrea nippona (Iwagaki oyster) protein is Nacrein-like protein C2.